The primary structure comprises 394 residues: Bone morphogenetic protein 15 (394 aa).

The signal sequence occupies residues 1 to 18; the sequence is MVLLSILRILLLWGLVLF. The propeptide occupies 19–269; that stretch reads MEHRVQMTQV…DPSLLLRRAR (251 aa). N-linked (GlcNAc...) asparagine glycosylation is found at Asn-87 and Asn-238. Cystine bridges form between Cys-293/Cys-359, Cys-322/Cys-391, and Cys-326/Cys-393. An N-linked (GlcNAc...) asparagine glycan is attached at Asn-375.

This sequence belongs to the TGF-beta family. In terms of assembly, homodimer or heterodimer (Potential). But, in contrast to other members of this family, cannot be disulfide-linked.

The protein localises to the secreted. May be involved in follicular development. Seems to be an oocyte-specific growth/differentiation factor that stimulates folliculogenesis and granulosa cell (GC) growth. This is Bone morphogenetic protein 15 (BMP15) from Bos taurus (Bovine).